The following is a 294-amino-acid chain: uncharacterized protein (294 aa).

Disordered regions lie at residues 1–30 (MKRQRPQDSMISVPLQNENSTTTPTKEVSH), 51–86 (ALSDITPDTPPAFKTPYSSLPYNLVPQNSSTSKKRP), and 250–294 (DELN…STST). Composition is skewed to polar residues over residues 7-26 (QDSMISVPLQNENSTTTPTK), 66-81 (PYSSLPYNLVPQNSST), and 255-277 (PMNNNDTPITNSTHSAQMSNLPT).

It localises to the nucleus. This is an uncharacterized protein from Schizosaccharomyces pombe (strain 972 / ATCC 24843) (Fission yeast).